We begin with the raw amino-acid sequence, 1538 residues long: Pentafunctional AROM polypeptide (1538 aa).

The interval 1 to 384 is 3-dehydroquinate synthase; sequence MGVPTKISIL…HEPRASTVSN (384 aa). Residues 44–46, 81–84, 114–116, and Asp-119 each bind NAD(+); these read DTN, ESSK, and GGV. Arg-130 lines the 7-phospho-2-dehydro-3-deoxy-D-arabino-heptonate pocket. 139–140 is a binding site for NAD(+); the sequence is TT. 7-phospho-2-dehydro-3-deoxy-D-arabino-heptonate-binding residues include Asp-146 and Lys-152. Lys-161 lines the NAD(+) pocket. Residue Asn-162 participates in 7-phospho-2-dehydro-3-deoxy-D-arabino-heptonate binding. NAD(+) contacts are provided by residues 179-182 and Asn-190; that span reads FLNT. A Zn(2+)-binding site is contributed by Glu-194. Residues 194–197 and Lys-250 each bind 7-phospho-2-dehydro-3-deoxy-D-arabino-heptonate; that span reads EVIK. Glu-260 (proton acceptor; for 3-dehydroquinate synthase activity) is an active-site residue. Residues 264-268 and His-271 contribute to the 7-phospho-2-dehydro-3-deoxy-D-arabino-heptonate site; that span reads RNLLN. Position 271 (His-271) interacts with Zn(2+). His-275 serves as the catalytic Proton acceptor; for 3-dehydroquinate synthase activity. Residues His-287 and Lys-356 each contribute to the 7-phospho-2-dehydro-3-deoxy-D-arabino-heptonate site. A Zn(2+)-binding site is contributed by His-287. Residues 397 to 842 form an EPSP synthase region; sequence VSPGVPKGLD…WDCLSQTFKV (446 aa). Cys-824 (for EPSP synthase activity) is an active-site residue. The tract at residues 866-973 is shikimate kinase; the sequence is ASIFIIGMRG…RRKQNTFFVS (108 aa). 872–879 serves as a coordination point for ATP; the sequence is GMRGAGKT. The interval 974–1194 is 3-dehydroquinase; the sequence is LTLPDLGLAA…AAPGQLSARE (221 aa). His-1097 acts as the Proton acceptor; for 3-dehydroquinate dehydratase activity in catalysis. Lys-1125 acts as the Schiff-base intermediate with substrate; for 3-dehydroquinate dehydratase activity in catalysis. The shikimate dehydrogenase stretch occupies residues 1207-1538; sequence AKKFAVIGNP…YEHPVLNHSS (332 aa).

It in the N-terminal section; belongs to the sugar phosphate cyclases superfamily. Dehydroquinate synthase family. The protein in the 2nd section; belongs to the EPSP synthase family. In the 3rd section; belongs to the shikimate kinase family. This sequence in the 4th section; belongs to the type-I 3-dehydroquinase family. It in the C-terminal section; belongs to the shikimate dehydrogenase family. Homodimer. The cofactor is Zn(2+).

It localises to the cytoplasm. The enzyme catalyses 7-phospho-2-dehydro-3-deoxy-D-arabino-heptonate = 3-dehydroquinate + phosphate. It catalyses the reaction 3-dehydroquinate = 3-dehydroshikimate + H2O. It carries out the reaction shikimate + NADP(+) = 3-dehydroshikimate + NADPH + H(+). The catalysed reaction is shikimate + ATP = 3-phosphoshikimate + ADP + H(+). The enzyme catalyses 3-phosphoshikimate + phosphoenolpyruvate = 5-O-(1-carboxyvinyl)-3-phosphoshikimate + phosphate. Its pathway is metabolic intermediate biosynthesis; chorismate biosynthesis; chorismate from D-erythrose 4-phosphate and phosphoenolpyruvate: step 2/7. It participates in metabolic intermediate biosynthesis; chorismate biosynthesis; chorismate from D-erythrose 4-phosphate and phosphoenolpyruvate: step 3/7. The protein operates within metabolic intermediate biosynthesis; chorismate biosynthesis; chorismate from D-erythrose 4-phosphate and phosphoenolpyruvate: step 4/7. It functions in the pathway metabolic intermediate biosynthesis; chorismate biosynthesis; chorismate from D-erythrose 4-phosphate and phosphoenolpyruvate: step 5/7. Its pathway is metabolic intermediate biosynthesis; chorismate biosynthesis; chorismate from D-erythrose 4-phosphate and phosphoenolpyruvate: step 6/7. In terms of biological role, the AROM polypeptide catalyzes 5 consecutive enzymatic reactions in prechorismate polyaromatic amino acid biosynthesis. The protein is Pentafunctional AROM polypeptide of Ajellomyces capsulatus (strain NAm1 / WU24) (Darling's disease fungus).